The following is a 174-amino-acid chain: ATP synthase subunit b (174 aa).

A helical membrane pass occupies residues 18–38 (IIVVSGSFLILMFLLKHFAWG).

It belongs to the ATPase B chain family. In terms of assembly, F-type ATPases have 2 components, F(1) - the catalytic core - and F(0) - the membrane proton channel. F(1) has five subunits: alpha(3), beta(3), gamma(1), delta(1), epsilon(1). F(0) has three main subunits: a(1), b(2) and c(10-14). The alpha and beta chains form an alternating ring which encloses part of the gamma chain. F(1) is attached to F(0) by a central stalk formed by the gamma and epsilon chains, while a peripheral stalk is formed by the delta and b chains.

The protein localises to the cell membrane. Its function is as follows. F(1)F(0) ATP synthase produces ATP from ADP in the presence of a proton or sodium gradient. F-type ATPases consist of two structural domains, F(1) containing the extramembraneous catalytic core and F(0) containing the membrane proton channel, linked together by a central stalk and a peripheral stalk. During catalysis, ATP synthesis in the catalytic domain of F(1) is coupled via a rotary mechanism of the central stalk subunits to proton translocation. In terms of biological role, component of the F(0) channel, it forms part of the peripheral stalk, linking F(1) to F(0). The protein is ATP synthase subunit b of Enterococcus hirae (strain ATCC 9790 / DSM 20160 / JCM 8729 / LMG 6399 / NBRC 3181 / NCIMB 6459 / NCDO 1258 / NCTC 12367 / WDCM 00089 / R).